Reading from the N-terminus, the 340-residue chain is UDP-3-O-(3-hydroxymyristoyl)glucosamine N-acyltransferase (340 aa).

The active-site Proton acceptor is His-239.

Belongs to the transferase hexapeptide repeat family. LpxD subfamily. Homotrimer.

The enzyme catalyses a UDP-3-O-[(3R)-3-hydroxyacyl]-alpha-D-glucosamine + a (3R)-hydroxyacyl-[ACP] = a UDP-2-N,3-O-bis[(3R)-3-hydroxyacyl]-alpha-D-glucosamine + holo-[ACP] + H(+). It catalyses the reaction UDP-3-O-[(3R)-3-hydroxytetradecanoyl]-alpha-D-glucosamine + (3R)-hydroxytetradecanoyl-[ACP] = UDP-2-N,3-O-bis[(3R)-3-hydroxytetradecanoyl]-alpha-D-glucosamine + holo-[ACP] + H(+). It participates in glycolipid biosynthesis; lipid IV(A) biosynthesis; lipid IV(A) from (3R)-3-hydroxytetradecanoyl-[acyl-carrier-protein] and UDP-N-acetyl-alpha-D-glucosamine: step 3/6. In terms of biological role, catalyzes the N-acylation of UDP-3-O-(hydroxytetradecanoyl)glucosamine using 3-hydroxytetradecanoyl-ACP as the acyl donor. Is involved in the biosynthesis of lipid A, a phosphorylated glycolipid that anchors the lipopolysaccharide to the outer membrane of the cell. In Pectobacterium atrosepticum (strain SCRI 1043 / ATCC BAA-672) (Erwinia carotovora subsp. atroseptica), this protein is UDP-3-O-(3-hydroxymyristoyl)glucosamine N-acyltransferase.